The sequence spans 133 residues: Alcohol dehydrogenase, 15 kDa subunit (133 aa).

The first 24 residues, 1–24, serve as a signal peptide directing secretion; sequence MFRRIVPVLGLALGLGLASQAAMA. Residues 23–43 form a disordered region; it reads MAQEQSPPPPPAVQGTPGKDF. A Pyrrolidone carboxylic acid modification is found at glutamine 25.

As to quaternary structure, the alcohol dehydrogenase multicomponent enzyme system is composed of a dehydrogenase subunit I (AdhA), a cytochrome c subunit II (AdhB) and a subunit III (AdhS).

The protein resides in the cell membrane. Functionally, part of the alcohol dehydrogenase multicomponent enzyme system which is involved in the production of acetic acid and in the ethanol oxidase respiratory chain. Does not play an obligatory role for the alcohol dehydrogenase (ADH) activity. The sequence is that of Alcohol dehydrogenase, 15 kDa subunit from Gluconobacter oxydans (strain 621H) (Gluconobacter suboxydans).